A 255-amino-acid polypeptide reads, in one-letter code: Uridylate kinase (255 aa).

Residues 1–21 (MSAAAAGRGERLNHAGNPGHR) form a disordered region. 30–33 (KLGG) lines the ATP pocket. Gly-71 contacts UMP. ATP contacts are provided by Gly-72 and Arg-76. UMP contacts are provided by residues Asp-91 and 152–159 (MGLPYFST). ATP-binding residues include Phe-185 and Asp-188.

Belongs to the UMP kinase family. Homohexamer.

It is found in the cytoplasm. It catalyses the reaction UMP + ATP = UDP + ADP. It participates in pyrimidine metabolism; CTP biosynthesis via de novo pathway; UDP from UMP (UMPK route): step 1/1. Its activity is regulated as follows. Inhibited by UTP. Functionally, catalyzes the reversible phosphorylation of UMP to UDP. This chain is Uridylate kinase, found in Mycobacterium leprae (strain TN).